A 228-amino-acid chain; its full sequence is Probable GTP-binding protein EngB (228 aa).

One can recognise an EngB-type G domain in the interval 48-222 (YGLEVAFVGY…QFVLNNWFSS (175 aa)). Residues 56 to 63 (GYSNSGKS), 83 to 87 (GRTRL), 101 to 104 (DFPG), 168 to 171 (NKMD), and 201 to 203 (FSS) contribute to the GTP site. Mg(2+)-binding residues include Ser63 and Thr85.

The protein belongs to the TRAFAC class TrmE-Era-EngA-EngB-Septin-like GTPase superfamily. EngB GTPase family. The cofactor is Mg(2+).

Its function is as follows. Necessary for normal cell division and for the maintenance of normal septation. The polypeptide is Probable GTP-binding protein EngB (Buchnera aphidicola subsp. Baizongia pistaciae (strain Bp)).